The following is a 270-amino-acid chain: SAGA-associated factor 29 homolog A (270 aa).

Position 2 is an N-acetylserine (S2). Residues 85–113 (LPSGPTGQQRRKLEGNEQKRKRMKVDTDV) form a disordered region. Residues 95–113 (RKLEGNEQKRKRMKVDTDV) show a composition bias toward basic and acidic residues. Residues 125 to 270 (EAYASLKGEQ…VVALPEGHRQ (146 aa)) form the SGF29 C-terminal domain. 2 histone H3K4me3 N-terminus binding regions span residues 168 to 170 (DEE) and 217 to 220 (GTTA). A histone H3K4me3 binding region spans residues 242–245 (FDDD).

Belongs to the SGF29 family. Expressed in roots, rosette leaves, cauline leaves, stems and flowers.

The protein resides in the nucleus. Its function is as follows. Chromatin reader component of the transcription regulatory histone acetylation (HAT) complex SAGA. Involved in salt stress tolerance. Enhances the effect of ADA2B in the positive regulation of salt-induced gene expression. The sequence is that of SAGA-associated factor 29 homolog A from Arabidopsis thaliana (Mouse-ear cress).